The primary structure comprises 115 residues: Large ribosomal subunit protein bL19 (115 aa).

Belongs to the bacterial ribosomal protein bL19 family.

Its function is as follows. This protein is located at the 30S-50S ribosomal subunit interface and may play a role in the structure and function of the aminoacyl-tRNA binding site. The polypeptide is Large ribosomal subunit protein bL19 (Lachnospira eligens (strain ATCC 27750 / DSM 3376 / VPI C15-48 / C15-B4) (Eubacterium eligens)).